The chain runs to 320 residues: Probable L,D-transpeptidase YcfS (320 aa).

An N-terminal signal peptide occupies residues methionine 1–alanine 23. A LysM domain is found at lysine 45–isoleucine 90. The L,D-TPase catalytic domain occupies glutamate 102–isoleucine 241. Histidine 201 acts as the Proton donor/acceptor in catalysis. Cysteine 217 serves as the catalytic Nucleophile.

It belongs to the YkuD family. Interacts with DsbG.

It localises to the periplasm. Its pathway is cell wall biogenesis; peptidoglycan biosynthesis. Its function is as follows. Responsible, at least in part, for anchoring of the major outer membrane lipoprotein (Lpp, also known as the Braun lipoprotein) to the peptidoglycan via a meso-diaminopimelyl-L-Lys- bond on the terminal residue of Lpp. In Escherichia coli (strain K12), this protein is Probable L,D-transpeptidase YcfS (ycfS).